A 190-amino-acid chain; its full sequence is DNA dC-&gt;dU-editing enzyme APOBEC-3C (190 aa).

Residues 29–138 (DRNETWLCFT…TDYQEGLRSL (110 aa)) form the CMP/dCMP-type deaminase domain. Zn(2+)-binding residues include His66, Cys97, and Cys100.

Belongs to the cytidine and deoxycytidylate deaminase family. As to quaternary structure, homodimer. Interacts with TRIB3. Zn(2+) is required as a cofactor.

Its subcellular location is the nucleus. It is found in the cytoplasm. It carries out the reaction a 2'-deoxycytidine in single-stranded DNA + H2O + H(+) = a 2'-deoxyuridine in single-stranded DNA + NH4(+). In terms of biological role, DNA deaminase (cytidine deaminase) which acts as an inhibitor of retrovirus replication and retrotransposon mobility via deaminase-dependent and -independent mechanisms. May also play a role in the epigenetic regulation of gene expression through the process of active DNA demethylation. The sequence is that of DNA dC-&gt;dU-editing enzyme APOBEC-3C (APOBEC3C) from Gorilla gorilla gorilla (Western lowland gorilla).